The following is an 804-amino-acid chain: Serine/threonine-protein kinase ATG1 (804 aa).

The 297-residue stretch at 12–308 (FTIGPEIGRG…FQEFFNDPLI (297 aa)) folds into the Protein kinase domain. ATP-binding positions include 18–26 (IGRGSFANV) and Lys41. Asp158 acts as the Proton acceptor in catalysis. 3 disordered regions span residues 339-364 (TSPP…ERAP), 395-415 (INKS…KGAR), and 455-506 (PSPH…MPIS). The span at 404-415 (TVKDGQIKKGAR) shows a compositional bias: basic and acidic residues. The segment covering 462–495 (NEHSAANPSGPTETQTQRRFSPSSRTSSIGSNRR) has biased composition (polar residues).

The protein belongs to the protein kinase superfamily. Ser/Thr protein kinase family. APG1/unc-51/ULK1 subfamily. In terms of assembly, homodimer. Forms a ternary complex with ATG13 and ATG17.

It is found in the cytoplasm. The protein resides in the preautophagosomal structure membrane. The enzyme catalyses L-seryl-[protein] + ATP = O-phospho-L-seryl-[protein] + ADP + H(+). The catalysed reaction is L-threonyl-[protein] + ATP = O-phospho-L-threonyl-[protein] + ADP + H(+). Functionally, serine/threonine protein kinase involved in the cytoplasm to vacuole transport (Cvt) and found to be essential in autophagy, where it is required for the formation of autophagosomes. Involved in the clearance of protein aggregates which cannot be efficiently cleared by the proteasome. Required for selective autophagic degradation of the nucleus (nucleophagy) as well as for mitophagy which contributes to regulate mitochondrial quantity and quality by eliminating the mitochondria to a basal level to fulfill cellular energy requirements and preventing excess ROS production. Also involved in endoplasmic reticulum-specific autophagic process, in selective removal of ER-associated degradation (ERAD) substrates. Plays a key role in ATG9 and ATG23 cycling through the pre-autophagosomal structure and is necessary to promote ATG18 binding to ATG9 through phosphorylation of ATG9. Catalyzes phosphorylation of ATG4, decreasing the interaction between ATG4 and ATG8 and impairing deconjugation of PE-conjugated forms of ATG8. This is Serine/threonine-protein kinase ATG1 from Pichia angusta (Yeast).